The following is a 40-amino-acid chain: Sarcotoxin-1D (40 aa).

This sequence belongs to the cecropin family.

The protein localises to the secreted. In terms of biological role, sarcotoxins, which are potent bactericidal proteins, are produced in response to injury. They are cytotoxic to both Gram-positive and Gram-negative bacteria. The protein is Sarcotoxin-1D of Sarcophaga peregrina (Flesh fly).